A 269-amino-acid polypeptide reads, in one-letter code: Centromere protein K (269 aa).

Acidic residues predominate over residues 1–10 (MNQEDLDPDS). The tract at residues 1–20 (MNQEDLDPDSTTDVGDVTNT) is disordered. 2 coiled-coil regions span residues 22 to 42 (EELIRECEEMWKDMEECQNKL) and 98 to 151 (QKLR…NKVE).

The protein belongs to the CENP-K/MCM22 family. Component of the CENPA-CAD complex, composed of CENPI, CENPK, CENPL, CENPO, CENPP, CENPQ, CENPR and CENPS. The CENPA-CAD complex interacts with the CENPA-NAC complex, at least composed of CENPA, CENPC, CENPH, CENPM, CENPN, CENPT and CENPU. Interacts directly with CENPH. Detected in several fetal organs with highest levels in fetal liver. In adults, it is weakly expressed in lung and placenta.

The protein localises to the nucleus. Its subcellular location is the chromosome. It localises to the centromere. It is found in the kinetochore. Functionally, component of the CENPA-CAD (nucleosome distal) complex, a complex recruited to centromeres which is involved in assembly of kinetochore proteins, mitotic progression and chromosome segregation. May be involved in incorporation of newly synthesized CENPA into centromeres via its interaction with the CENPA-NAC complex. Acts in coordination with KNL1 to recruit the NDC80 complex to the outer kinetochore. The protein is Centromere protein K (CENPK) of Homo sapiens (Human).